A 162-amino-acid polypeptide reads, in one-letter code: UPF0114 protein PSEEN0819 (162 aa).

The next 3 helical transmembrane spans lie at 15 to 35 (LLAP…LKFF), 53 to 73 (LVLV…LVMV), and 136 to 156 (LMWY…MGYL).

Belongs to the UPF0114 family.

It is found in the cell membrane. This is UPF0114 protein PSEEN0819 from Pseudomonas entomophila (strain L48).